Consider the following 72-residue polypeptide: NAD(P)H-quinone oxidoreductase subunit O (72 aa).

This sequence belongs to the complex I NdhO subunit family. As to quaternary structure, NDH-1 can be composed of about 15 different subunits; different subcomplexes with different compositions have been identified which probably have different functions.

It is found in the cellular thylakoid membrane. It catalyses the reaction a plastoquinone + NADH + (n+1) H(+)(in) = a plastoquinol + NAD(+) + n H(+)(out). The enzyme catalyses a plastoquinone + NADPH + (n+1) H(+)(in) = a plastoquinol + NADP(+) + n H(+)(out). Functionally, NDH-1 shuttles electrons from an unknown electron donor, via FMN and iron-sulfur (Fe-S) centers, to quinones in the respiratory and/or the photosynthetic chain. The immediate electron acceptor for the enzyme in this species is believed to be plastoquinone. Couples the redox reaction to proton translocation, and thus conserves the redox energy in a proton gradient. Cyanobacterial NDH-1 also plays a role in inorganic carbon-concentration. The polypeptide is NAD(P)H-quinone oxidoreductase subunit O (Trichodesmium erythraeum (strain IMS101)).